The following is a 509-amino-acid chain: Maturase K (509 aa).

The protein belongs to the intron maturase 2 family. MatK subfamily.

It localises to the plastid. The protein localises to the chloroplast. Functionally, usually encoded in the trnK tRNA gene intron. Probably assists in splicing its own and other chloroplast group II introns. The protein is Maturase K of Nicotiana sylvestris (Wood tobacco).